A 564-amino-acid polypeptide reads, in one-letter code: Beta-catenin-like protein 1 homolog (564 aa).

The disordered stretch occupies residues 1-56 (MDVDSIFKNTEETNKKRNPEEADSLEPASSRRRLAEENSDEENEEFDEEGGRFFGS). The span at 9–20 (NTEETNKKRNPE) shows a compositional bias: basic and acidic residues. Residues 37-48 (ENSDEENEEFDE) show a composition bias toward acidic residues. Ser39 is modified (phosphoserine). HEAT repeat units follow at residues 83-133 (PTEL…VLSE) and 138-177 (IPIF…DEDV). ARM repeat units follow at residues 179-229 (PDAL…LLSV), 230-276 (DNSI…LANS), 277-326 (KEAK…LVQE), 328-366 (KGKS…LLFG), and 367-411 (PLST…LFRS). The stretch at 465 to 528 (EKSTKWFLQQ…DALKNYHENL (64 aa)) forms a coiled coil.

Its subcellular location is the nucleus. In terms of biological role, probable spliceosomal component involved in the activation of pre-mRNA splicing. The polypeptide is Beta-catenin-like protein 1 homolog (ctnnbl1) (Schizosaccharomyces pombe (strain 972 / ATCC 24843) (Fission yeast)).